A 587-amino-acid chain; its full sequence is Probable terpene synthase 12 (587 aa).

Mg(2+)-binding residues include D338, D342, and E489. The short motif at 338–342 (DDVYD) is the DDXXD motif element.

This sequence belongs to the terpene synthase family. Mg(2+) serves as cofactor.

Probable sesquiterpene synthase. The sequence is that of Probable terpene synthase 12 (TPS12) from Ricinus communis (Castor bean).